The sequence spans 215 residues: Vesicle-trafficking protein SEC22b (215 aa).

Over 2 to 194 the chain is Cytoplasmic; that stretch reads VLLTMIARVA…KYLNMRSTYA (193 aa). The Longin domain maps to 6–119; that stretch reads MIARVADGLP…YSFIEFDTFI (114 aa). At Lys38 the chain carries N6-acetyllysine. The v-SNARE coiled-coil homology domain maps to 134–194; sequence NLGSINTELQ…KYLNMRSTYA (61 aa). Ser137 is subject to Phosphoserine. The residue at position 140 (Thr140) is a Phosphothreonine. 4 positions are modified to phosphoserine: Ser164, Ser168, Ser174, and Ser177. A helical; Anchor for type IV membrane protein membrane pass occupies residues 195-215; it reads KLAAVAVFFIMLIVYVRFWWL.

Belongs to the synaptobrevin family. As to quaternary structure, interacts with STX17. Component of two distinct SNARE complexes consisting of STX5, GOSR2/BOS1, BET1 and SEC22B or STX18, USE1L, BNIP1/SEC20L and SEC22B. YKT6 can probably replace SEC22B in either complex. Interacts with the COPII Sec23/24 complex composed of SEC23A and SEC24A; recruits SEC22B into COPII-coated vesicles to allow its transport from the endoplasmic reticulum to the Golgi. Interacts with BET1.

The protein resides in the endoplasmic reticulum membrane. The protein localises to the endoplasmic reticulum-Golgi intermediate compartment membrane. It is found in the golgi apparatus. It localises to the cis-Golgi network membrane. Its subcellular location is the trans-Golgi network membrane. The protein resides in the melanosome. Its function is as follows. SNARE involved in targeting and fusion of ER-derived transport vesicles with the Golgi complex as well as Golgi-derived retrograde transport vesicles with the ER. The sequence is that of Vesicle-trafficking protein SEC22b (SEC22B) from Homo sapiens (Human).